A 137-amino-acid chain; its full sequence is Immunoglobulin domain-containing protein oig-1 (137 aa).

Residues 1-23 (MFSELRILRDILLLCFLSVGINA) form the signal peptide. In terms of domain architecture, Ig-like C2-type spans 41–133 (PKISRSSYFK…KGSRVKKFLT (93 aa)). Cysteine 63 and cysteine 118 form a disulfide bridge.

As to expression, expressed in DD and VD GABAergic motor neurons. Expressed in a subset of head neurons including M2 motor neurons in the pharynx. Expressed in coelomocytes.

The protein resides in the membrane. The protein localises to the secreted. It localises to the extracellular space. It is found in the cell projection. Its subcellular location is the dendrite. The protein resides in the axon. Functionally, plays a role in neural development, where it temporally regulates synapse formation in the D-type inhibitory GABAergic motor neurons, dorsal D (DD) and ventral D (VD) motor neurons. Controls the translocation of postsynaptic proteins, such as the acetylcholine receptor subunit acr-12, and presynaptic proteins, such as snb-1, along nerve cords to prevent premature synapse remodeling/formation. The chain is Immunoglobulin domain-containing protein oig-1 from Caenorhabditis elegans.